Consider the following 176-residue polypeptide: NAD(P)H-quinone oxidoreductase subunit 6, chloroplastic (176 aa).

5 helical membrane passes run 10–30, 33–53, 61–81, 92–112, and 152–172; these read FLLV…VLLP, IYSA…YILL, AQLL…VMFM, LWTI…ISLI, and FFLP…GAIA.

The protein belongs to the complex I subunit 6 family. In terms of assembly, NDH is composed of at least 16 different subunits, 5 of which are encoded in the nucleus.

Its subcellular location is the plastid. It is found in the chloroplast thylakoid membrane. It catalyses the reaction a plastoquinone + NADH + (n+1) H(+)(in) = a plastoquinol + NAD(+) + n H(+)(out). The enzyme catalyses a plastoquinone + NADPH + (n+1) H(+)(in) = a plastoquinol + NADP(+) + n H(+)(out). Functionally, NDH shuttles electrons from NAD(P)H:plastoquinone, via FMN and iron-sulfur (Fe-S) centers, to quinones in the photosynthetic chain and possibly in a chloroplast respiratory chain. The immediate electron acceptor for the enzyme in this species is believed to be plastoquinone. Couples the redox reaction to proton translocation, and thus conserves the redox energy in a proton gradient. The chain is NAD(P)H-quinone oxidoreductase subunit 6, chloroplastic (ndhG) from Coffea arabica (Arabian coffee).